The chain runs to 224 residues: PKHD-type hydroxylase tll1907 (224 aa).

The Fe2OG dioxygenase domain occupies 77–176 (KIIGPLLFSR…RLVAVAWVQS (100 aa)). Fe cation-binding residues include H96, D98, and H157. R167 lines the 2-oxoglutarate pocket.

Requires Fe(2+) as cofactor. The cofactor is L-ascorbate.

The chain is PKHD-type hydroxylase tll1907 from Thermosynechococcus vestitus (strain NIES-2133 / IAM M-273 / BP-1).